A 436-amino-acid chain; its full sequence is 3-ketoacyl-CoA thiolase (436 aa).

Cysteine 99 acts as the Acyl-thioester intermediate in catalysis. Active-site proton acceptor residues include histidine 392 and cysteine 422.

Belongs to the thiolase-like superfamily. Thiolase family. Heterotetramer of two alpha chains (FadJ) and two beta chains (FadI).

It localises to the cytoplasm. The catalysed reaction is an acyl-CoA + acetyl-CoA = a 3-oxoacyl-CoA + CoA. It participates in lipid metabolism; fatty acid beta-oxidation. Its function is as follows. Catalyzes the final step of fatty acid oxidation in which acetyl-CoA is released and the CoA ester of a fatty acid two carbons shorter is formed. This chain is 3-ketoacyl-CoA thiolase, found in Pseudoalteromonas translucida (strain TAC 125).